The following is a 122-amino-acid chain: Basic phospholipase A2 LmTX-I (122 aa).

6 cysteine pairs are disulfide-bonded: cysteine 26-cysteine 115, cysteine 28-cysteine 44, cysteine 43-cysteine 95, cysteine 49-cysteine 122, cysteine 50-cysteine 88, and cysteine 75-cysteine 86. Residues tyrosine 27, glycine 29, and glycine 31 each coordinate Ca(2+). Histidine 47 is an active-site residue. Position 48 (aspartate 48) interacts with Ca(2+). Aspartate 89 is an active-site residue.

In terms of assembly, monomer. Ca(2+) serves as cofactor. Expressed by the venom gland.

The protein resides in the secreted. It carries out the reaction a 1,2-diacyl-sn-glycero-3-phosphocholine + H2O = a 1-acyl-sn-glycero-3-phosphocholine + a fatty acid + H(+). Inhibited by Mn(2+), Mg(2+), Zn(2+) and Cu(2+). Snake venom phospholipase A2 (PLA2) that displays neurotoxic and myotoxic activities. Induces inflammatory edema by mechanisms involving mast cell activation and arachidonic acid metabolites. Increases plasma creatine kinase activity. PLA2 catalyzes the calcium-dependent hydrolysis of the 2-acyl groups in 3-sn-phosphoglycerides. In Lachesis muta muta (Bushmaster), this protein is Basic phospholipase A2 LmTX-I.